We begin with the raw amino-acid sequence, 494 residues long: ETS translocation variant 4 (494 aa).

Disordered stretches follow at residues 82–113 and 139–201; these read ENSV…SHKQ and AGGS…SGSA. The segment covering 100–113 has biased composition (polar residues); that stretch reads SPGSDPSQSCSHKQ. Residues 176-187 are compositionally biased toward low complexity; that stretch reads SSSQSHACHSHS. A compositionally biased stretch (polar residues) spans 188 to 197; it reads YPMNPSSRFP. Residues 350–430 constitute a DNA-binding region (ETS); the sequence is LQLWQFLVAL…AGERYVYKFV (81 aa).

This sequence belongs to the ETS family. Post-translationally, phosphorylated. As to expression, in the embryo, expressed ubiquitously until the late blastula stage, in the marginal zone of gastrula stages, in the presumptive forebrain and hindbrain and in the trunk region of early somite stages. In later stages, also expressed in Rohon-Beard neurons, epiphysis, lateral line placodes, pectoral fin buds, developing lens and heart.

The protein resides in the nucleus. Its function is as follows. Transcriptional activator that binds to the (5'-CCGGA[AT]-3') motif. May control the acquisition of specific cell fates at an early stage during development of the somites and nervous system. May mediate the cellular effects of the fibroblast growth factors on embryogenesis. The polypeptide is ETS translocation variant 4 (etv4) (Danio rerio (Zebrafish)).